Here is a 180-residue protein sequence, read N- to C-terminus: Adenine phosphoribosyltransferase (180 aa).

The residue at position 2 (Ala2) is an N-acetylalanine. Phosphoserine occurs at positions 15 and 30. Position 60 is a phosphotyrosine (Tyr60). Phosphoserine is present on Ser66. At Thr135 the chain carries Phosphothreonine.

It belongs to the purine/pyrimidine phosphoribosyltransferase family. In terms of assembly, homodimer.

The protein localises to the cytoplasm. It carries out the reaction AMP + diphosphate = 5-phospho-alpha-D-ribose 1-diphosphate + adenine. Its pathway is purine metabolism; AMP biosynthesis via salvage pathway; AMP from adenine: step 1/1. In terms of biological role, catalyzes a salvage reaction resulting in the formation of AMP, that is energically less costly than de novo synthesis. The sequence is that of Adenine phosphoribosyltransferase from Bos taurus (Bovine).